A 104-amino-acid chain; its full sequence is UPF0147 protein MK1586 (104 aa).

This sequence belongs to the UPF0147 family.

The sequence is that of UPF0147 protein MK1586 from Methanopyrus kandleri (strain AV19 / DSM 6324 / JCM 9639 / NBRC 100938).